A 1482-amino-acid polypeptide reads, in one-letter code: Lysine-specific demethylase rbr-2 (1482 aa).

Positions 1-45 (MRGRRQEDIATTSSAPSTSTSHKKKTVSSNGSFRPRTQSNPGGKM) are disordered. Low complexity predominate over residues 11–20 (TTSSAPSTST). Residues 30-41 (NGSFRPRTQSNP) are compositionally biased toward polar residues. A JmjN domain is found at 61-102 (APVYYPTSEEFADPIEYVAKIRPDAERYGVVKIVPPSDFKPP). Residues 126–223 (VKEKHTFIER…HIEPFNRNLK (98 aa)) form the ARID domain. Positions 244-316 (YQHHHGTMRS…SKTEEDEEEN (73 aa)) are disordered. Residues 251 to 264 (MRSEPENTDGKNTE) show a composition bias toward basic and acidic residues. The span at 277-288 (GRRRSKNKKPVP) shows a compositional bias: basic residues. The segment at 322-374 (QVYCVSCNEGKDEDLLLLCDIEGCNSGRHTYCCDPVLDEVPEGEWRCPKCIES) adopts a PHD-type 1 zinc-finger fold. Residues 471 to 637 (QYANHAWNLN…KGRECVQSYS (167 aa)) enclose the JmjC domain. Fe cation contacts are provided by histidine 517, aspartate 520, and histidine 605. Residues 1206–1260 (LEGCCCLGGNKSDSSESVLSCIMCESQFHVRCCEWSTFFQHLPKGCFMCVRCLRG) form a PHD-type 2 zinc finger. A disordered region spans residues 1361–1403 (QQRPVKSKPSASLFDPKLNSKRKRPNPSQKDSSKSKSRKRQGQ). The segment at 1416–1471 (FKSCQARSCLKPFGDSVNWVMCDAGCKNWFHVICVGFTLREINDMHEYRCSSCLDH) adopts a PHD-type 3 zinc-finger fold.

It belongs to the JARID1 histone demethylase family. Fe(2+) is required as a cofactor.

The protein localises to the nucleus. The catalysed reaction is N(6),N(6),N(6)-trimethyl-L-lysyl(4)-[histone H3] + 3 2-oxoglutarate + 3 O2 = L-lysyl(4)-[histone H3] + 3 formaldehyde + 3 succinate + 3 CO2. Functionally, histone demethylase that specifically demethylates 'Lys-4' of histone H3, thereby playing a central role in histone code. Does not demethylate histone H3 'Lys-9', H3 'Lys-27', H3 'Lys-36', H3 'Lys-79' or H4 'Lys-20'. Demethylates trimethylated and dimethylated but not monomethylated H3 'Lys-4'. Involved in larval development and vulva formation. The protein is Lysine-specific demethylase rbr-2 (rbr-2) of Caenorhabditis briggsae.